A 340-amino-acid polypeptide reads, in one-letter code: TATA-box-binding protein (340 aa).

The interval 1-78 (MNLNSPAVSM…HSLQGSSMQM (78 aa)) is disordered. Over residues 57-68 (PQSIQPMQSQQM) the composition is skewed to low complexity. Positions 69-78 (HSLQGSSMQM) are enriched in polar residues. 2 repeat units span residues 168–244 (LQNI…ARIV) and 258–335 (VQNM…YPIL).

The protein belongs to the TBP family. In terms of assembly, component of the TFIID basal transcription factor complex, composed of TATA-box-binding protein tbp-1, and a number of TBP-associated factors (TAFs). Binds DNA as monomer.

The protein resides in the nucleus. The TFIID basal transcription factor complex plays a major role in the initiation of RNA polymerase II (Pol II)-dependent transcription. TFIID recognizes and binds promoters via its subunit tbp-1, a TATA-box-binding protein, and promotes assembly of the pre-initiation complex (PIC). The TFIID complex consists of tbp-1 and TBP-associated factors (TAFs). General transcription factor that functions at the core of the TFIID complex. The chain is TATA-box-binding protein (tbp-1) from Caenorhabditis elegans.